Here is a 92-residue protein sequence, read N- to C-terminus: Defensin (92 aa).

The signal sequence occupies residues 1 to 20 (MKFFVLVAIAFALLACVAQA). A propeptide spanning residues 21 to 52 (QPVSDVDPIPEDHVLVHEDAHQEVLQHSRQKR) is cleaved from the precursor. Disulfide bonds link C55–C82, C68–C88, and C72–C90.

This sequence belongs to the invertebrate defensin family. Type 1 subfamily. Hemolymph (at protein level).

The protein localises to the secreted. Functionally, responsible for the anti Gram-positive activity of immune hemolymph. Expressed in the absence of immune challenge during metamorphosis. The protein is Defensin (Def) of Drosophila melanogaster (Fruit fly).